The primary structure comprises 159 residues: Ribosomal RNA large subunit methyltransferase H (159 aa).

S-adenosyl-L-methionine-binding positions include I75, G108, and 127-132; that span reads FGRMTL.

The protein belongs to the RNA methyltransferase RlmH family. Homodimer.

The protein resides in the cytoplasm. The catalysed reaction is pseudouridine(1915) in 23S rRNA + S-adenosyl-L-methionine = N(3)-methylpseudouridine(1915) in 23S rRNA + S-adenosyl-L-homocysteine + H(+). Its function is as follows. Specifically methylates the pseudouridine at position 1915 (m3Psi1915) in 23S rRNA. The polypeptide is Ribosomal RNA large subunit methyltransferase H (Lactococcus lactis subsp. lactis (strain IL1403) (Streptococcus lactis)).